The sequence spans 248 residues: Probable transcriptional regulatory protein Avi_3631 (248 aa).

This sequence belongs to the TACO1 family.

The protein localises to the cytoplasm. This chain is Probable transcriptional regulatory protein Avi_3631, found in Allorhizobium ampelinum (strain ATCC BAA-846 / DSM 112012 / S4) (Agrobacterium vitis (strain S4)).